Reading from the N-terminus, the 153-residue chain is Endoribonuclease YbeY (153 aa).

Positions 113, 117, and 123 each coordinate Zn(2+).

The protein belongs to the endoribonuclease YbeY family. Requires Zn(2+) as cofactor.

It is found in the cytoplasm. Its function is as follows. Single strand-specific metallo-endoribonuclease involved in late-stage 70S ribosome quality control and in maturation of the 3' terminus of the 16S rRNA. This Aliivibrio fischeri (strain MJ11) (Vibrio fischeri) protein is Endoribonuclease YbeY.